The sequence spans 141 residues: HTH-type transcriptional repressor NsrR (141 aa).

The HTH rrf2-type domain maps to 2-129 (QLTSFTDYAL…DDCSIAELLD (128 aa)). A DNA-binding region (H-T-H motif) is located at residues 28–51 (ITDVTELFGVSRNHMVKVINRLGQ). [2Fe-2S] cluster is bound by residues Cys-91, Cys-96, and Cys-102.

The cofactor is [2Fe-2S] cluster.

In terms of biological role, nitric oxide-sensitive repressor of genes involved in protecting the cell against nitrosative stress. May require iron for activity. This is HTH-type transcriptional repressor NsrR from Vibrio vulnificus (strain CMCP6).